Reading from the N-terminus, the 760-residue chain is Serine/threonine-protein kinase PknG (760 aa).

The interval 1-31 (MTSPENPDLPDADDAYVDSGPGTQPASLEDL) is disordered. The Protein kinase domain maps to 161–403 (YEIKGCIAHG…SAEEMSSQLL (243 aa)). ATP contacts are provided by residues 167–175 (IAHGGLGWV) and lysine 191. The active-site Proton acceptor is aspartate 286.

Belongs to the protein kinase superfamily. Ser/Thr protein kinase family. In terms of assembly, interacts with GarA in vitro.

It carries out the reaction L-seryl-[protein] + ATP = O-phospho-L-seryl-[protein] + ADP + H(+). The enzyme catalyses L-threonyl-[protein] + ATP = O-phospho-L-threonyl-[protein] + ADP + H(+). This is Serine/threonine-protein kinase PknG (pknG) from Mycolicibacterium smegmatis (strain ATCC 700084 / mc(2)155) (Mycobacterium smegmatis).